The primary structure comprises 264 residues: 3-methyl-2-oxobutanoate hydroxymethyltransferase (264 aa).

Residues Asp-45 and Asp-84 each coordinate Mg(2+). 3-methyl-2-oxobutanoate is bound by residues 45–46, Asp-84, and Lys-112; that span reads DS. Mg(2+) is bound at residue Glu-114. Glu-181 functions as the Proton acceptor in the catalytic mechanism.

It belongs to the PanB family. Homodecamer; pentamer of dimers. The cofactor is Mg(2+).

It localises to the cytoplasm. It catalyses the reaction 3-methyl-2-oxobutanoate + (6R)-5,10-methylene-5,6,7,8-tetrahydrofolate + H2O = 2-dehydropantoate + (6S)-5,6,7,8-tetrahydrofolate. The protein operates within cofactor biosynthesis; (R)-pantothenate biosynthesis; (R)-pantoate from 3-methyl-2-oxobutanoate: step 1/2. Catalyzes the reversible reaction in which hydroxymethyl group from 5,10-methylenetetrahydrofolate is transferred onto alpha-ketoisovalerate to form ketopantoate. This chain is 3-methyl-2-oxobutanoate hydroxymethyltransferase, found in Tolumonas auensis (strain DSM 9187 / NBRC 110442 / TA 4).